The chain runs to 405 residues: Phosphopentomutase (405 aa).

Mn(2+) contacts are provided by D10, D303, H308, D344, H345, and H356.

This sequence belongs to the phosphopentomutase family. Mn(2+) serves as cofactor.

It is found in the cytoplasm. The catalysed reaction is 2-deoxy-alpha-D-ribose 1-phosphate = 2-deoxy-D-ribose 5-phosphate. It carries out the reaction alpha-D-ribose 1-phosphate = D-ribose 5-phosphate. It functions in the pathway carbohydrate degradation; 2-deoxy-D-ribose 1-phosphate degradation; D-glyceraldehyde 3-phosphate and acetaldehyde from 2-deoxy-alpha-D-ribose 1-phosphate: step 1/2. In terms of biological role, isomerase that catalyzes the conversion of deoxy-ribose 1-phosphate (dRib-1-P) and ribose 1-phosphate (Rib-1-P) to deoxy-ribose 5-phosphate (dRib-5-P) and ribose 5-phosphate (Rib-5-P), respectively. This Shewanella frigidimarina (strain NCIMB 400) protein is Phosphopentomutase.